We begin with the raw amino-acid sequence, 504 residues long: Cytochrome P450 monooxygenase braC (504 aa).

A helical membrane pass occupies residues 4–24 (LYLPTIWASTLTAATIFIVAV). Cysteine 448 contacts heme.

This sequence belongs to the cytochrome P450 family. Heme is required as a cofactor.

Its subcellular location is the membrane. It participates in secondary metabolite biosynthesis. Its function is as follows. Cytochrome P450 monooxygenase; part of the gene cluster that mediates the biosynthesis of the brasilane terpene glycosides brasilane D and E. The biosynthesis starts with the activity of the terpene cyclase braA that converts farnesyl pyrophosphate into the sesquiterpene alcohol trichobrasilenol. Subsequently, trichobrasilenol is glycosylated by the O-glycosyltransferase braB putatively using UDP-GlcNAc as sugar donor to yield brasilane A. The latter then undergoes two rounds of oxidation performed by the cytochrome P450 monooxygenase braC. In the first round braC hydroxylates C-12 forming brasilane D, which serves as substrate in the second round to establish the epoxide at the bond between C-5 and C-10 and oxidize the alcohol at C-12 to an aldehyde leading to the final product brasilane E. This is Cytochrome P450 monooxygenase braC from Annulohypoxylon truncatum (Hypoxylon truncatum).